Here is a 118-residue protein sequence, read N- to C-terminus: Large ribosomal subunit protein bL19 (118 aa).

The protein belongs to the bacterial ribosomal protein bL19 family.

Its function is as follows. This protein is located at the 30S-50S ribosomal subunit interface and may play a role in the structure and function of the aminoacyl-tRNA binding site. The protein is Large ribosomal subunit protein bL19 of Ligilactobacillus salivarius (strain UCC118) (Lactobacillus salivarius).